A 447-amino-acid polypeptide reads, in one-letter code: MSTMTPAEIVSELDKHIIGQAKAKKAVAVALRNRWRRQQVGEPLRQEITPKNILMIGPTGVGKTEIARRLAKLADAPFVKIEATKFTEVGYVGRDVDSIVRDLIEISVKQTREAEMRKVRSKATDQAEDRILDILLPQPRAVGFGGNADHANDDNNATRQTFRKRLREGQLDDKEVELDLEQPSAGMDIMAPPGMEEMTEQIRSMFSNLGSGKKQRRKVKIKEALKLLTDEEAAKMLNDEEVKTKAVQNVEQNGIVFLDEIDKITSRNNEGSGGEVSRQGVQRDLLPLVEGTTVNTKYGMVKTDHILFIASGAFHLAKPSDLIPELQGRFPIRVELDSLSVEDFEAILDATDASLVKQYQALLATEDVQLEFAADGIRRLAEIAYSVNEKTENIGARRLYTVIEKLLEEVSFSAGNHAGECVTIDATYVDRALGEVAQDEDLSRYVL.

Residues isoleucine 18, 60-65, aspartate 259, glutamate 325, and arginine 397 each bind ATP; that span reads GVGKTE.

This sequence belongs to the ClpX chaperone family. HslU subfamily. As to quaternary structure, a double ring-shaped homohexamer of HslV is capped on each side by a ring-shaped HslU homohexamer. The assembly of the HslU/HslV complex is dependent on binding of ATP.

The protein localises to the cytoplasm. Functionally, ATPase subunit of a proteasome-like degradation complex; this subunit has chaperone activity. The binding of ATP and its subsequent hydrolysis by HslU are essential for unfolding of protein substrates subsequently hydrolyzed by HslV. HslU recognizes the N-terminal part of its protein substrates and unfolds these before they are guided to HslV for hydrolysis. This Burkholderia ambifaria (strain MC40-6) protein is ATP-dependent protease ATPase subunit HslU.